We begin with the raw amino-acid sequence, 583 residues long: Moesin/ezrin/radixin homolog 1 (583 aa).

The FERM domain occupies 11–301; the sequence is MNVRVTTMDA…GNHELYMRRR (291 aa). Disordered stretches follow at residues 466–518 and 539–558; these read TTTP…RTLA and RDDTMETANDKIHRENVRQG. Residues 476–485 are compositionally biased toward acidic residues; sequence EEEEDNEEEL. The segment covering 496–518 has biased composition (basic and acidic residues); sequence DYSKDFDTDEHIKDPVEERRTLA. A Phosphothreonine modification is found at T564.

As to quaternary structure, interacts with cytoskeletal actin.

Its subcellular location is the cell junction. It localises to the adherens junction. The protein localises to the cell projection. It is found in the microvillus. The protein resides in the rhabdomere. Its subcellular location is the cell membrane. It localises to the cytoplasm. The protein localises to the cytoskeleton. Functionally, involved in connections of major cytoskeletal structures to the plasma membrane. The polypeptide is Moesin/ezrin/radixin homolog 1 (Aedes aegypti (Yellowfever mosquito)).